The primary structure comprises 144 residues: Transcription antitermination protein NusB (144 aa).

It belongs to the NusB family.

Its function is as follows. Involved in transcription antitermination. Required for transcription of ribosomal RNA (rRNA) genes. Binds specifically to the boxA antiterminator sequence of the ribosomal RNA (rrn) operons. The chain is Transcription antitermination protein NusB from Pasteurella multocida (strain Pm70).